Consider the following 213-residue polypeptide: Small ribosomal subunit protein uS3 (213 aa).

The KH type-2 domain maps to Ile-38–Arg-106.

Belongs to the universal ribosomal protein uS3 family. Part of the 30S ribosomal subunit. Forms a tight complex with proteins S10 and S14.

In terms of biological role, binds the lower part of the 30S subunit head. Binds mRNA in the 70S ribosome, positioning it for translation. The polypeptide is Small ribosomal subunit protein uS3 (Maridesulfovibrio salexigens (strain ATCC 14822 / DSM 2638 / NCIMB 8403 / VKM B-1763) (Desulfovibrio salexigens)).